The primary structure comprises 603 residues: Grainyhead-like protein 3 homolog (603 aa).

A transcription activation region spans residues 30-95 (EAWKTYLENP…QGKKFYHSMD (66 aa)). The Grh/CP2 DB domain maps to 226–461 (GLKSDFEYTL…DLETQPVLFI (236 aa)).

This sequence belongs to the grh/CP2 family. Grainyhead subfamily. Homodimer, also forms heterodimers with GRHL1 and GRHL2. Interacts with LMO4.

It localises to the nucleus. Its function is as follows. Transcription factor playing important roles in primary neurulation and in the differentiation of stratified epithelia of both ectodermal and endodermal origin. Binds directly to the consensus DNA sequence 5'-AACCGGTT-3' acting as an activator and repressor on distinct target genes. Essential for epidermal differentiation and barrier formation at the end of embryogenesis with TGM3 as critical direct target. Exhibits functional redundancy with GRHL2 in epidermal morphogenetic events such as eyelid fusion and epidermal wound repair. Despite being dispensable during normal epidermal homeostasis in the adulthood, is again required for barrier repair after immune-mediated epidermal damage, regulates distinct gene batteries in embryonic epidermal differentiation and adult epidermal barrier reformation after injury. Plays unique and cooperative roles with GRHL2 in establishing distinct zones of primary neurulation. Essential for spinal closure, functions cooperatively with GRHL2 in closure 2 (forebrain/midbrain boundary) and posterior neuropore closure. Also required for proper development of the oral periderm. No genetic interaction with GRHL1, no functional cooperativity due to diverse target gene selectivity. The polypeptide is Grainyhead-like protein 3 homolog (Mus musculus (Mouse)).